The chain runs to 528 residues: Bifunctional purine biosynthesis protein PurH (528 aa).

The region spanning 2–149 (TDLAPLRRAL…KNHGFVSVVV (148 aa)) is the MGS-like domain.

Belongs to the PurH family.

The catalysed reaction is (6R)-10-formyltetrahydrofolate + 5-amino-1-(5-phospho-beta-D-ribosyl)imidazole-4-carboxamide = 5-formamido-1-(5-phospho-D-ribosyl)imidazole-4-carboxamide + (6S)-5,6,7,8-tetrahydrofolate. It catalyses the reaction IMP + H2O = 5-formamido-1-(5-phospho-D-ribosyl)imidazole-4-carboxamide. The protein operates within purine metabolism; IMP biosynthesis via de novo pathway; 5-formamido-1-(5-phospho-D-ribosyl)imidazole-4-carboxamide from 5-amino-1-(5-phospho-D-ribosyl)imidazole-4-carboxamide (10-formyl THF route): step 1/1. Its pathway is purine metabolism; IMP biosynthesis via de novo pathway; IMP from 5-formamido-1-(5-phospho-D-ribosyl)imidazole-4-carboxamide: step 1/1. The chain is Bifunctional purine biosynthesis protein PurH from Roseobacter denitrificans (strain ATCC 33942 / OCh 114) (Erythrobacter sp. (strain OCh 114)).